The following is a 141-amino-acid chain: Regulator of ribonuclease activity B (141 aa).

Positions 119–132 (DEDFDDEDDDEDYD) are enriched in acidic residues. A disordered region spans residues 119–141 (DEDFDDEDDDEDYDKDGFPIERH).

This sequence belongs to the RraB family. Interacts with the C-terminal region of Rne.

Its subcellular location is the cytoplasm. Functionally, globally modulates RNA abundance by binding to RNase E (Rne) and regulating its endonucleolytic activity. Can modulate Rne action in a substrate-dependent manner by altering the composition of the degradosome. This chain is Regulator of ribonuclease activity B, found in Shewanella amazonensis (strain ATCC BAA-1098 / SB2B).